The following is a 646-amino-acid chain: Type III restriction-modification enzyme EcoPI Mod subunit (646 aa).

Residues 123-126 (DPPY) form a binding of S-adenosyl methionine region.

The protein belongs to the N(4)/N(6)-methyltransferase family. In terms of assembly, homodimer. A heterotetramer with stoichiometry Res(2)Mod(2).

The catalysed reaction is a 2'-deoxyadenosine in DNA + S-adenosyl-L-methionine = an N(6)-methyl-2'-deoxyadenosine in DNA + S-adenosyl-L-homocysteine + H(+). In terms of biological role, a beta subtype methylase that binds the system-specific DNA recognition site 5'-AGACC-3' and methylates A-3 (of only 1 strand as the other does not have an A residue). DNA restriction requires both the Res and Mod subunits. The polypeptide is Type III restriction-modification enzyme EcoPI Mod subunit (Enterobacteriaceae (Bacteriophage P1)).